The primary structure comprises 582 residues: Proline--tRNA ligase (582 aa).

The protein belongs to the class-II aminoacyl-tRNA synthetase family. ProS type 1 subfamily. In terms of assembly, homodimer.

The protein resides in the cytoplasm. It catalyses the reaction tRNA(Pro) + L-proline + ATP = L-prolyl-tRNA(Pro) + AMP + diphosphate. Catalyzes the attachment of proline to tRNA(Pro) in a two-step reaction: proline is first activated by ATP to form Pro-AMP and then transferred to the acceptor end of tRNA(Pro). As ProRS can inadvertently accommodate and process non-cognate amino acids such as alanine and cysteine, to avoid such errors it has two additional distinct editing activities against alanine. One activity is designated as 'pretransfer' editing and involves the tRNA(Pro)-independent hydrolysis of activated Ala-AMP. The other activity is designated 'posttransfer' editing and involves deacylation of mischarged Ala-tRNA(Pro). The misacylated Cys-tRNA(Pro) is not edited by ProRS. This chain is Proline--tRNA ligase, found in Mycobacterium ulcerans (strain Agy99).